A 357-amino-acid polypeptide reads, in one-letter code: 3-dehydroquinate synthase (357 aa).

Residues Gly104–Asp108, Thr128–Thr129, Lys141, and Phe168–Thr171 each bind NAD(+). Zn(2+) is bound by residues Glu183, His243, and His260.

It belongs to the sugar phosphate cyclases superfamily. Dehydroquinate synthase family. The cofactor is Co(2+). Zn(2+) serves as cofactor. NAD(+) is required as a cofactor.

It is found in the cytoplasm. It carries out the reaction 7-phospho-2-dehydro-3-deoxy-D-arabino-heptonate = 3-dehydroquinate + phosphate. Its pathway is metabolic intermediate biosynthesis; chorismate biosynthesis; chorismate from D-erythrose 4-phosphate and phosphoenolpyruvate: step 2/7. Catalyzes the conversion of 3-deoxy-D-arabino-heptulosonate 7-phosphate (DAHP) to dehydroquinate (DHQ). The polypeptide is 3-dehydroquinate synthase (Streptococcus pyogenes serotype M5 (strain Manfredo)).